Consider the following 398-residue polypeptide: Transcription termination factor 1, mitochondrial (398 aa).

A mitochondrion-targeting transit peptide spans 1–57; sequence MQSLSLGQTSISKGLNYLTIMAPGNLWHMRNNFLFGSRCWMTRFSAENIFKSVSFRL. Interaction with DNA stretches follow at residues 169–170, 246–250, 323–330, 354–357, and 383–390; these read RS, QSTKR, AEKKFNDK, SIST, and SKKRYEAK.

This sequence belongs to the mTERF family. As to quaternary structure, monomer. Post-translationally, phosphoprotein with mostly four phosphate groups. While the DNA-binding activity is unaffected by the phosphorylation state, only the phosphorylated form of the protein is active for termination activity. Functioning seems to be regulated by phosphorylation.

Its subcellular location is the mitochondrion. In terms of biological role, transcription termination factor. Binds to a 28 bp region within the tRNA(Leu(uur)) gene at a position immediately adjacent to and downstream of the 16S rRNA gene; this region comprises a tridecamer sequence critical for directing accurate termination. Binds DNA along the major grove and promotes DNA bending and partial unwinding. Promotes base flipping. Transcription termination activity appears to be polarized with highest specificity for transcripts initiated on the light strand. The protein is Transcription termination factor 1, mitochondrial (MTERF1) of Pongo abelii (Sumatran orangutan).